Reading from the N-terminus, the 231-residue chain is Endonuclease NucS (231 aa).

It belongs to the NucS endonuclease family.

It is found in the cytoplasm. Cleaves both 3' and 5' ssDNA extremities of branched DNA structures. The protein is Endonuclease NucS of Arthrobacter sp. (strain FB24).